Consider the following 244-residue polypeptide: tRNA pseudouridine synthase A (244 aa).

Catalysis depends on aspartate 52, which acts as the Nucleophile. Tyrosine 110 contacts substrate.

The protein belongs to the tRNA pseudouridine synthase TruA family. As to quaternary structure, homodimer.

The enzyme catalyses uridine(38/39/40) in tRNA = pseudouridine(38/39/40) in tRNA. In terms of biological role, formation of pseudouridine at positions 38, 39 and 40 in the anticodon stem and loop of transfer RNAs. The sequence is that of tRNA pseudouridine synthase A from Geobacter sulfurreducens (strain ATCC 51573 / DSM 12127 / PCA).